The chain runs to 221 residues: Protein GrpE 1 (221 aa).

2 disordered regions span residues 1 to 44 (MTEE…AAAQ) and 192 to 221 (VAEP…PEEG). Low complexity predominate over residues 26–44 (KAAPSEGAAPAGDAAAAAQ). Basic and acidic residues predominate over residues 203–221 (KADEAEAADDKESGGPEEG).

Belongs to the GrpE family. Homodimer.

The protein resides in the cytoplasm. Its function is as follows. Participates actively in the response to hyperosmotic and heat shock by preventing the aggregation of stress-denatured proteins, in association with DnaK and GrpE. It is the nucleotide exchange factor for DnaK and may function as a thermosensor. Unfolded proteins bind initially to DnaJ; upon interaction with the DnaJ-bound protein, DnaK hydrolyzes its bound ATP, resulting in the formation of a stable complex. GrpE releases ADP from DnaK; ATP binding to DnaK triggers the release of the substrate protein, thus completing the reaction cycle. Several rounds of ATP-dependent interactions between DnaJ, DnaK and GrpE are required for fully efficient folding. The polypeptide is Protein GrpE 1 (Streptomyces avermitilis (strain ATCC 31267 / DSM 46492 / JCM 5070 / NBRC 14893 / NCIMB 12804 / NRRL 8165 / MA-4680)).